We begin with the raw amino-acid sequence, 296 residues long: Maltose/maltodextrin transport system permease protein MalG (296 aa).

The Cytoplasmic segment spans residues 1–12 (MAMVQGKSLKYR). Residues 13-35 (VWATHIAMWAFLALIIFPLLMII) traverse the membrane as a helical segment. Topologically, residues 36–88 (AISFREGNFATGSLIPDNPTLDHWKLALGFSITNADGTVTPPPFPVMTWLWNS) are periplasmic. Positions 85–281 (LWNSVKVGGI…VPITAVFLLA (197 aa)) constitute an ABC transmembrane type-1 domain. A helical membrane pass occupies residues 89–111 (VKVGGISAILIVALSTTSAYAFA). Residues 112-123 (RMKFKGKNTILK) lie on the Cytoplasmic side of the membrane. A helical membrane pass occupies residues 124–143 (AMMIFQMFPAVLALVALYAL). At 144 to 152 (FDKLGQYIP) the chain is on the periplasmic side. The helical transmembrane segment at 153–175 (FLGLNTHGGLIFAYLGGIALHVW) threads the bilayer. Topologically, residues 176-204 (TIKGYFESIDSSLEEAAALDGATPWQAFR) are cytoplasmic. Residues 205 to 227 (LVLLPLSVPILAVVFILSFIMVI) form a helical membrane-spanning segment. The Periplasmic segment spans residues 228–257 (GEVPVASLLLSDVDSYTLAVGMQQYLYPQN). The chain crosses the membrane as a helical span at residues 258–280 (YLWGDFAAAAVLSAVPITAVFLL). The Cytoplasmic segment spans residues 281-296 (AQRWLVGGLTAGGVKG).

It belongs to the binding-protein-dependent transport system permease family. MalFG subfamily. As to quaternary structure, the complex is composed of two ATP-binding proteins (MalK), two transmembrane proteins (MalG and MalF) and a solute-binding protein (MalE).

It localises to the cell inner membrane. Functionally, part of the ABC transporter complex MalEFGK involved in maltose/maltodextrin import. Probably responsible for the translocation of the substrate across the membrane. In Vibrio parahaemolyticus serotype O3:K6 (strain RIMD 2210633), this protein is Maltose/maltodextrin transport system permease protein MalG (malG).